The following is a 505-amino-acid chain: AMP phosphorylase (505 aa).

Residues glycine 170, serine 196–serine 201, and threonine 205 contribute to the AMP site. The active-site Proton donor is the aspartate 258. AMP-binding residues include serine 266 and lysine 290.

The protein belongs to the thymidine/pyrimidine-nucleoside phosphorylase family. Type 2 subfamily.

It carries out the reaction AMP + phosphate = alpha-D-ribose 1,5-bisphosphate + adenine. It catalyses the reaction CMP + phosphate = cytosine + alpha-D-ribose 1,5-bisphosphate. The enzyme catalyses UMP + phosphate = alpha-D-ribose 1,5-bisphosphate + uracil. Functionally, catalyzes the conversion of AMP and phosphate to adenine and ribose 1,5-bisphosphate (R15P). Exhibits phosphorylase activity toward CMP and UMP in addition to AMP. Functions in an archaeal AMP degradation pathway, together with R15P isomerase and RubisCO. In Methanococcus maripaludis (strain C5 / ATCC BAA-1333), this protein is AMP phosphorylase.